The primary structure comprises 2442 residues: Histone lysine acetyltransferase CREBBP (2442 aa).

Disordered stretches follow at residues 1-40 (MAENLLDGPPNPKRAKLSSPGFSANDSTDFGSLFDLENDL) and 74-168 (RGGS…PATS). N-acetylalanine is present on Ala2. Positions 20 to 30 (PGFSANDSTDF) are enriched in polar residues. Ser120 is subject to Phosphoserine. The span at 125-168 (GDSSTPSLPKQAASTSGPTPPASQALNPQAQKQVGLVTSSPATS) shows a compositional bias: polar residues. Arg219 carries the post-translational modification Omega-N-methylarginine. The tract at residues 226–409 (PAPAMQGATS…GKACQVAHCA (184 aa)) is interaction with SRCAP. Low complexity predominate over residues 261–272 (GGMTKMGMTGNT). Residues 261–290 (GGMTKMGMTGNTSPFGQPFSQTGGQPMGAT) form a disordered region. Residues 273 to 284 (SPFGQPFSQTGG) are compositionally biased toward polar residues. The TAZ-type 1 zinc finger occupies 346-432 (DPEKRKLIQQ…RHDCPVCLPL (87 aa)). 12 residues coordinate Zn(2+): His362, Cys366, Cys379, Cys384, His393, Cys397, Cys403, Cys408, His417, Cys421, Cys426, and Cys429. The KIX domain maps to 586-665 (GVRKGWHEHV…KIYKIQKELE (80 aa)). Residues Arg600 and Arg624 each carry the asymmetric dimethylarginine modification. Lys656 is subject to N6-acetyllysine. Residues 792–825 (FLPQNQFPSSSGAMSVNSVGMGQPATQAGVSQGQ) are compositionally biased toward polar residues. The segment at 792–1084 (FLPQNQFPSS…STSPSQPRKK (293 aa)) is disordered. 2 stretches are compositionally biased toward pro residues: residues 846 to 862 (PCPPVTQSPLHPTPPPA) and 874 to 887 (PTPPGMTPPQPAAP). Residues 894-906 (VSSGQTPTPTPGS) are compositionally biased toward polar residues. Low complexity-rich tracts occupy residues 909–930 (SAAQTQSTPTVQAAAQAQVTPQ) and 938–957 (PSVATPQSSQQQPTPVHTQP). Positions 974–989 (PTPSSVTSAETSSQQP) are enriched in polar residues. Residue Lys999 forms a Glycyl lysine isopeptide (Lys-Gly) (interchain with G-Cter in SUMO1) linkage. Positions 1012 to 1022 (AESKGEPRSEM) are enriched in basic and acidic residues. Lys1015 carries the N6-acetyllysine modification. Ser1031 carries the phosphoserine modification. A compositionally biased stretch (basic and acidic residues) spans 1033 to 1060 (VKEETDTTEQKSEPMEVEEKKPEVKVEA). Residues Lys1034 and Lys1057 each participate in a glycyl lysine isopeptide (Lys-Gly) (interchain with G-Cter in SUMO1) cross-link. The span at 1067–1080 (SANGTASQSTSPSQ) shows a compositional bias: polar residues. The residue at position 1077 (Ser1077) is a Phosphoserine. A Bromo domain is found at 1086–1193 (FKPEELRQAL…EVFEQEIDPV (108 aa)). The interval 1125–1171 (DYFDIVKNPMDLSTIKRKLDTGQYQEPWQYVDDVWLMFNNAWLYNRK) is interaction with histone. Positions 1163–1181 (NNAWLYNRKTSRVYKFCSK) are interaction with ASF1A. Lys1217 carries the post-translational modification N6-acetyllysine. The CBP/p300-type HAT domain occupies 1324–1701 (KFSAKRLQTT…MLVELHTQGQ (378 aa)). Ser1383 and Ser1387 each carry phosphoserine; by IKKA. Positions 1434–1436 (YLD) are interaction with histone. Acetyl-CoA contacts are provided by residues 1435–1437 (LDS), 1447–1448 (RT), Ile1494, Arg1499, and Trp1503. A coiled-coil region spans residues 1548–1575 (NVLEESIKELEQEEEERKKEESTAASET). Positions 1557-1569 (LEQEEEERKKEES) are enriched in basic and acidic residues. Residues 1557 to 1616 (LEQEEEERKKEESTAASETPEGSQGDSKNAKKKNNKKTNKNKSSISRANKKKPSMPNVSN) are disordered. 5 positions are modified to N6-acetyllysine: Lys1584, Lys1592, Lys1593, Lys1596, and Lys1598. The segment covering 1586-1596 (AKKKNNKKTNK) has biased composition (basic residues). A ZZ-type zinc finger spans residues 1703-1751 (RFVYTCNECKHHVETRWHCTVCEDYDLCINCYNTKSHTHKMVKWGLGLD). The Zn(2+) site is built by Cys1708, Cys1711, Cys1721, Cys1724, Cys1730, Cys1733, His1739, and His1741. 2 positions are modified to N6-acetyllysine: Lys1742 and Lys1745. Ser1764 bears the Phosphoserine mark. The TAZ-type 2 zinc-finger motif lies at 1766–1847 (QESRRLSIQR…KCPVPFCLNI (82 aa)). The tract at residues 1875-1960 (TRNVPQQSLP…QPPPAAVEAA (86 aa)) is disordered. 2 stretches are compositionally biased toward pro residues: residues 1901–1913 (PQTPQPPAQPQPS) and 1944–1955 (PAPPPPAQPPPA). Residues Ser2064, Ser2077, and Ser2080 each carry the phosphoserine modification. The segment at 2112–2421 (NQPGMQPQPG…LNTPNRSALS (310 aa)) is disordered. Composition is skewed to low complexity over residues 2113–2138 (QPGMQPQPGLQSQPGMQPQPGMHQQP), 2197–2217 (QLLQHQQQQQQQQQQQQQQQQ), 2261–2280 (MGQMAAPMGQLGQMGQPGLG), and 2287–2305 (IQQALQQRILQQQQMKQQI). 2 stretches are compositionally biased toward polar residues: residues 2315–2327 (SPQQHMLSGQPQA) and 2334–2343 (QIATSLSNQV). Over residues 2349 to 2372 (VQSPRPQSQPPHSSPSPRIQPQPS) the composition is skewed to pro residues. The residue at position 2351 (Ser2351) is a Phosphoserine. A compositionally biased stretch (polar residues) spans 2411–2421 (QLNTPNRSALS).

As to quaternary structure, part of a complex composed of MSX3, CREBBP/CBP AND EP300/p300; the interaction with MSX3 decreases histone acetylation activity. Found in a complex containing NCOA2; NCOA3; IKKA; IKKB and IKBKG. Probably part of a complex with HIF1A and EP300. Interacts with phosphorylated CREB1. Interacts with the C-terminal region of CITED4. The TAZ-type 1 domain interacts with HIF1A. Interacts with SRCAP, CARM1, ELF3, MLLT7/FOXO4, N4BP2, NCOA1, NCOA3, NCOA6, PCAF, DDX5, DDX17, PELP1, PML, SMAD1, SMAD2, SMAD3, SPIB, TRERF1 and ZCCHC12. Interacts with KLF1; the interaction results in acetylation and enhancement of transcriptional activity of KLF1. Interacts with DAXX; the interaction is dependent on CBP sumoylation and results in suppression of the transcriptional activity via recruitment of HDAC2 to DAXX. Interacts with MAF. Interacts with MTDH. Interacts with MAFG; the interaction acetylates MAFG in the basic region and stimulates NFE2 transcriptional activity through increasing its DNA-binding activity. Interacts with IRF2; the interaction acetylates IRF2 and regulates its activity on the H4 promoter. Interacts (via N-terminus) with SS18L1/CREST (via C-terminus). Interacts with IRF3 (when phosphorylated); forming the dsRNA-activated factor 1 (DRAF1), a complex which activates the transcription of the type I interferon genes. Interacts with MECOM. Interacts with CITED1 (via C-terminus) Interacts with GATA1; the interaction results in acetylation and enhancement of transcriptional activity of GATA1. Interacts with FOXO1; the interaction acetylates FOXO1 and inhibits its transcriptional activity. Interacts with NPAS2, CLOCK and BMAL1. Interacts with ASF1A and ASF1B; this promotes histone acetylation. Interacts with acetylated TP53/p53 and with the acetylated histones H3 and H4. Interacts (via transactivation domain and C-terminus) with PCNA; the interaction occurs on chromatin in UV-irradiated damaged cells. Interacts with DHX9 (via N-terminus); this interaction mediates association with RNA polymerase II holoenzyme and stimulates CREB-dependent transcriptional activation. Interacts with SMAD4; negatively regulated by ZBTB7A. Forms a complex with KMT2A and CREB1. Interacts with DDX3X; this interaction may facilitate HNF4A acetylation. Interacts with MSX1; the interaction may inhibit MSX1 autoinactivation. Interacts with MSX3. Interacts with ACSS2. Post-translationally, methylation of the KIX domain by CARM1 blocks association with CREB. This results in the blockade of CREB signaling, and in activation of apoptotic response. In terms of processing, phosphorylated by CHUK/IKKA at Ser-1383 and Ser-1387; these phosphorylations promote cell growth by switching the binding preference of CREBBP from TP53 to NF-kappa-B. Sumoylation negatively regulates transcriptional activity via the recruitment of DAAX. Post-translationally, autoacetylation is required for binding to protein substrates, such as acetylated histones and acetylated TP53/p53. Autoacetylation is induced by glucose and fatty acids. As to expression, expressed in hypothalamus and cortex.

The protein localises to the cytoplasm. It is found in the nucleus. The enzyme catalyses L-lysyl-[histone] + acetyl-CoA = N(6)-acetyl-L-lysyl-[histone] + CoA + H(+). The catalysed reaction is L-lysyl-[protein] + acetyl-CoA = N(6)-acetyl-L-lysyl-[protein] + CoA + H(+). It carries out the reaction (S)-lactoyl-CoA + L-lysyl-[protein] = N(6)-[(S)-lactoyl]-L-lysyl-[protein] + CoA + H(+). Its function is as follows. Acetylates histones, giving a specific tag for transcriptional activation. Mediates acetylation of histone H3 at 'Lys-18' and 'Lys-27' (H3K18ac and H3K27ac, respectively). Also acetylates non-histone proteins, like DDX21, FBL, IRF2, MAFG, NCOA3, POLR1E/PAF53 and FOXO1. Binds specifically to phosphorylated CREB and enhances its transcriptional activity toward cAMP-responsive genes. Acts as a coactivator of ALX1. Acts as a circadian transcriptional coactivator which enhances the activity of the circadian transcriptional activators: NPAS2-BMAL1 and CLOCK-BMAL1 heterodimers. Acetylates PCNA; acetylation promotes removal of chromatin-bound PCNA and its degradation during nucleotide excision repair (NER). Acetylates POLR1E/PAF53, leading to decreased association of RNA polymerase I with the rDNA promoter region and coding region. Acetylates DDX21, thereby inhibiting DDX21 helicase activity. Acetylates FBL, preventing methylation of 'Gln-105' of histone H2A (H2AQ104me). In addition to protein acetyltransferase, can use different acyl-CoA substrates, such as lactoyl-CoA, and is able to mediate protein lactylation. Catalyzes lactylation of MRE11 in response to DNA damage, thereby promoting DNA double-strand breaks (DSBs) via homologous recombination (HR). Functions as a transcriptional coactivator for SMAD4 in the TGF-beta signaling pathway. The sequence is that of Histone lysine acetyltransferase CREBBP (Crebbp) from Rattus norvegicus (Rat).